Here is a 671-residue protein sequence, read N- to C-terminus: TOM1-like protein 6 (671 aa).

Ala-2 is modified (N-acetylalanine). In terms of domain architecture, VHS spans 15-144; it reads ATSDLLLGPD…ELRRSGVEFP (130 aa). Ser-147 bears the Phosphoserine mark. One can recognise a GAT domain in the interval 229-317; it reads EVEGLSLSSI…LLAKHDAIAS (89 aa). 2 disordered regions span residues 320-620 and 636-671; these read PLPV…VGQK and GSAD…RKMI. A compositionally biased stretch (low complexity) spans 334–362; sequence ASKPADSSPKSSEAKDSSSIAGSSSPIPA. The span at 372 to 382 shows a compositional bias: acidic residues; the sequence is DEEYEEEEDEF. Residues 395-405 show a composition bias toward polar residues; the sequence is SVTTDPTSLES. Over residues 407–417 the composition is skewed to low complexity; sequence NAASNALALAL. Residues 444–459 are compositionally biased toward pro residues; the sequence is STPPAPSSQPSPPPPA. Low complexity predominate over residues 483–554; the sequence is AQQQQPQQPQ…QPSTRPQNPY (72 aa). Composition is skewed to polar residues over residues 562–598 and 605–616; these read ASTS…NSFP and QATSTASNSGVS. Position 596 is a phosphoserine (Ser-596). Residues 647–663 show a composition bias toward low complexity; that stretch reads NSSNGSQNLSGSQTQQS.

It belongs to the TOM1 family. In terms of tissue distribution, ubiquitously expressed.

Its subcellular location is the endosome. It is found in the multivesicular body. The protein resides in the cytoplasm. The protein localises to the early endosome membrane. Acts as a gatekeeper for degradative protein sorting to the vacuole. Plays a role in recognition of ubiquitinated PIN2 auxin carrier at the plasma membrane and further to its endocytic sorting. Binds ubiquitin in vitro. Might contribute to the loading of the ESCRT machinery. In Arabidopsis thaliana (Mouse-ear cress), this protein is TOM1-like protein 6.